Consider the following 175-residue polypeptide: Cuticle protein 16.5, isoform B (175 aa).

Repeat copies occupy residues 17–20, 25–28, 31–34, 38–41, 44–47, 51–54, 57–60, 64–67, 70–73, 77–80, 83–86, 91–94, 99–102, 106–109, 134–137, 144–147, 151–154, 158–161, and 165–168.

Functionally, component of the cuticle of migratory locust which contains more than 100 different structural proteins. The chain is Cuticle protein 16.5, isoform B from Locusta migratoria (Migratory locust).